The sequence spans 192 residues: MTKDVVVEHGESSKAPLVAAPAASGVGRAASVADVFLRFLAIVGTIASAISMGTTNETLPFFTQFIQFEAKYSDLPSFTFFVAANAVVCTYLVLSIPLSIVHIVRPRARYSRLVLVFFDAAMLTLLTAGASAAAAIVYLAHKGNVRANWFAICQQFDSFCERISGSLIGSFAAMVLLIMLIFLSAFALARRH.

The Cytoplasmic portion of the chain corresponds to 1 to 31 (MTKDVVVEHGESSKAPLVAAPAASGVGRAAS). The helical transmembrane segment at 32-52 (VADVFLRFLAIVGTIASAISM) threads the bilayer. At 53 to 79 (GTTNETLPFFTQFIQFEAKYSDLPSFT) the chain is on the extracellular side. N-linked (GlcNAc...) asparagine glycosylation is present at N56. The helical transmembrane segment at 80 to 100 (FFVAANAVVCTYLVLSIPLSI) threads the bilayer. The Cytoplasmic portion of the chain corresponds to 101–112 (VHIVRPRARYSR). Residues 113 to 133 (LVLVFFDAAMLTLLTAGASAA) form a helical membrane-spanning segment. Residues 134 to 166 (AAIVYLAHKGNVRANWFAICQQFDSFCERISGS) lie on the Extracellular side of the membrane. Residues 167–187 (LIGSFAAMVLLIMLIFLSAFA) traverse the membrane as a helical segment. At 188–192 (LARRH) the chain is on the cytoplasmic side.

It belongs to the Casparian strip membrane proteins (CASP) family. In terms of assembly, homodimer and heterodimers.

It is found in the cell membrane. Regulates membrane-cell wall junctions and localized cell wall deposition. Required for establishment of the Casparian strip membrane domain (CSD) and the subsequent formation of Casparian strips, a cell wall modification of the root endodermis that determines an apoplastic barrier between the intraorganismal apoplasm and the extraorganismal apoplasm and prevents lateral diffusion. This chain is Casparian strip membrane protein 2, found in Panicum virgatum (Blackwell switchgrass).